Here is a 355-residue protein sequence, read N- to C-terminus: Syntaxin-5 (355 aa).

At 1-333 the chain is on the cytoplasmic side; the sequence is MIPRKRYGSK…KYFQSVTSNR (333 aa). The span at 28–37 shows a compositional bias: polar residues; it reads PATAGSSSSD. Residues 28–51 are disordered; it reads PATAGSSSSDIAPLPPPVTLVPPP. Over residues 40-51 the composition is skewed to pro residues; sequence PLPPPVTLVPPP. Positions 245 to 247 match the IxM motif; signal for cargo packaging into COPII-coated vesicles motif; the sequence is IDM. The region spanning 263-325 is the t-SNARE coiled-coil homology domain; sequence DSYIQSRADT…EAAHSEILKY (63 aa). Residues 287–318 adopt a coiled-coil conformation; the sequence is FQQLAHMVKEQEETIQRIDENVLGAQLDVEAA. A helical; Anchor for type IV membrane protein transmembrane segment spans residues 334–354; sequence WLMVKIFLILIVFFIIFVVFL. Position 355 (Ala-355) is a topological domain, vesicular.

Belongs to the syntaxin family. Part of a ternary complex containing STX5A, NSFL1C and VCP. Identified in a unique SNARE complex composed of the Golgi SNAREs GOSR1, GOSR2, YKT6 and VTI1A. Component of a SNARE complex consisting of STX5, YKT6, GOSR1 and BET1L. Interacts with BET1L. Interacts with BET1. Interacts with COG4. Interacts with GM130/GOLGA2. Interacts (via IxM motif) with SEC24C and SEC24D; mediates STX5 packaging into COPII-coated vesicles. Interacts with VLDLR; this interaction mediates VLDLR translocation from the endoplasmic reticulum to the plasma membrane.

It localises to the endoplasmic reticulum-Golgi intermediate compartment membrane. The protein localises to the golgi apparatus membrane. Mediates endoplasmic reticulum to Golgi transport. Together with p115/USO1 and GM130/GOLGA2, involved in vesicle tethering and fusion at the cis-Golgi membrane to maintain the stacked and inter-connected structure of the Golgi apparatus. Functionally, required for Golgi to endoplasmic reticulum retrogade transport, and for intra-Golgi transport. Its function is as follows. (Microbial infection) Required for the efficient production of infectious virion during human cytomegalovirus infection. Mechanistically, participates in the formation of the cytoplasmic viral assembly compartment where tegument acquisition and envelopment occur. The polypeptide is Syntaxin-5 (STX5) (Homo sapiens (Human)).